An 83-amino-acid polypeptide reads, in one-letter code: Phosphoribosylformylglycinamidine synthase subunit PurS (83 aa).

Belongs to the PurS family. Homodimer. Part of the FGAM synthase complex composed of 1 PurL, 1 PurQ and 2 PurS subunits.

Its subcellular location is the cytoplasm. It carries out the reaction N(2)-formyl-N(1)-(5-phospho-beta-D-ribosyl)glycinamide + L-glutamine + ATP + H2O = 2-formamido-N(1)-(5-O-phospho-beta-D-ribosyl)acetamidine + L-glutamate + ADP + phosphate + H(+). It participates in purine metabolism; IMP biosynthesis via de novo pathway; 5-amino-1-(5-phospho-D-ribosyl)imidazole from N(2)-formyl-N(1)-(5-phospho-D-ribosyl)glycinamide: step 1/2. Functionally, part of the phosphoribosylformylglycinamidine synthase complex involved in the purines biosynthetic pathway. Catalyzes the ATP-dependent conversion of formylglycinamide ribonucleotide (FGAR) and glutamine to yield formylglycinamidine ribonucleotide (FGAM) and glutamate. The FGAM synthase complex is composed of three subunits. PurQ produces an ammonia molecule by converting glutamine to glutamate. PurL transfers the ammonia molecule to FGAR to form FGAM in an ATP-dependent manner. PurS interacts with PurQ and PurL and is thought to assist in the transfer of the ammonia molecule from PurQ to PurL. The protein is Phosphoribosylformylglycinamidine synthase subunit PurS of Methanocaldococcus jannaschii (strain ATCC 43067 / DSM 2661 / JAL-1 / JCM 10045 / NBRC 100440) (Methanococcus jannaschii).